The primary structure comprises 661 residues: DNA ligase (661 aa).

Residues 31 to 35, 80 to 81, and Glu109 each bind NAD(+); these read DSGYD and SL. Catalysis depends on Lys111, which acts as the N6-AMP-lysine intermediate. 4 residues coordinate NAD(+): Arg132, Glu167, Lys283, and Lys307. 4 residues coordinate Zn(2+): Cys401, Cys404, Cys419, and Cys424. The BRCT domain maps to 582 to 661; sequence AGEQLLQGKT…AGFLNLLGLS (80 aa).

Belongs to the NAD-dependent DNA ligase family. LigA subfamily. Mg(2+) serves as cofactor. It depends on Mn(2+) as a cofactor.

It carries out the reaction NAD(+) + (deoxyribonucleotide)n-3'-hydroxyl + 5'-phospho-(deoxyribonucleotide)m = (deoxyribonucleotide)n+m + AMP + beta-nicotinamide D-nucleotide.. Functionally, DNA ligase that catalyzes the formation of phosphodiester linkages between 5'-phosphoryl and 3'-hydroxyl groups in double-stranded DNA using NAD as a coenzyme and as the energy source for the reaction. It is essential for DNA replication and repair of damaged DNA. This chain is DNA ligase, found in Syntrophomonas wolfei subsp. wolfei (strain DSM 2245B / Goettingen).